The primary structure comprises 572 residues: Cytosolic Fe-S cluster assembly factor NAR1 (572 aa).

Positions 20, 62, 65, 68, 205, and 260 each coordinate [4Fe-4S] cluster. The interval Ala-416–Lys-436 is disordered. [4Fe-4S] cluster contacts are provided by Cys-450 and Cys-454.

The protein belongs to the NARF family.

Functionally, component of the cytosolic Fe/S protein assembly machinery. Required for maturation of extramitochondrial Fe/S proteins. May play a role in the transfer of pre-assembled Fe/S clusters to target apoproteins. This Botryotinia fuckeliana (strain B05.10) (Noble rot fungus) protein is Cytosolic Fe-S cluster assembly factor NAR1 (NAR1).